The following is a 139-amino-acid chain: Ribulose bisphosphate carboxylase small subunit (139 aa).

It belongs to the RuBisCO small chain family. In terms of assembly, heterohexadecamer of 8 large and 8 small subunits.

It localises to the plastid. Its subcellular location is the chloroplast. Functionally, ruBisCO catalyzes two reactions: the carboxylation of D-ribulose 1,5-bisphosphate, the primary event in carbon dioxide fixation, as well as the oxidative fragmentation of the pentose substrate in the photorespiration process. Both reactions occur simultaneously and in competition at the same active site. Although the small subunit is not catalytic it is essential for maximal activity. The chain is Ribulose bisphosphate carboxylase small subunit from Guillardia theta (Cryptophyte).